The following is a 340-amino-acid chain: Phosphoribosylformylglycinamidine cyclo-ligase (340 aa).

Belongs to the AIR synthase family.

It localises to the cytoplasm. The catalysed reaction is 2-formamido-N(1)-(5-O-phospho-beta-D-ribosyl)acetamidine + ATP = 5-amino-1-(5-phospho-beta-D-ribosyl)imidazole + ADP + phosphate + H(+). Its pathway is purine metabolism; IMP biosynthesis via de novo pathway; 5-amino-1-(5-phospho-D-ribosyl)imidazole from N(2)-formyl-N(1)-(5-phospho-D-ribosyl)glycinamide: step 2/2. In Streptococcus pyogenes serotype M18 (strain MGAS8232), this protein is Phosphoribosylformylglycinamidine cyclo-ligase.